Reading from the N-terminus, the 156-residue chain is Ribosome maturation factor RimP (156 aa).

The protein belongs to the RimP family.

The protein resides in the cytoplasm. Its function is as follows. Required for maturation of 30S ribosomal subunits. This chain is Ribosome maturation factor RimP, found in Dictyoglomus thermophilum (strain ATCC 35947 / DSM 3960 / H-6-12).